We begin with the raw amino-acid sequence, 451 residues long: Protein SAR DEFICIENT 1 (451 aa).

The segment at 149–270 is DNA-binding; that stretch reads DKWTSDEFES…AFHKKLSSRH (122 aa).

Belongs to the plant ACBP60 protein family. (Microbial infection) Interacts with V.dahliae SCP41.

It is found in the nucleus. Its function is as follows. Transcription activator that binds DNA in a sequence-specific manner, 5'-GAAATTTTGG-3', to promote the expression of target genes. Recruited to the promoter of ICS1 and other defense-related genes (e.g. PR1 and SID2) in response to both biotic (e.g. Pseudomonas syringae pv. maculicola ES4326) and abiotic stresses (e.g. UV-B), thus triggering slow defense responses by stimulating salicylic acid (SA) biosynthesis. Required for basal and systemic acquired resistance to P.syringae pv. maculicola and Hyaloperonospora arabidopsidis. In Arabidopsis thaliana (Mouse-ear cress), this protein is Protein SAR DEFICIENT 1.